The sequence spans 109 residues: Hainantoxin-XVIII.2 (109 aa).

The N-terminal stretch at 1–18 (MKLSIIIIVTSLVIAVVA) is a signal peptide. A propeptide spanning residues 19–46 (FPSKDSKAIENDKTEQRMEIVVQETARA) is cleaved from the precursor. Cystine bridges form between Cys-47–Cys-62, Cys-55–Cys-68, Cys-59–Cys-108, and Cys-61–Cys-81.

It belongs to the neurotoxin 25 family. F7 subfamily. Expressed by the venom gland.

The protein localises to the secreted. In terms of biological role, putative ion channel inhibitor. The sequence is that of Hainantoxin-XVIII.2 from Cyriopagopus hainanus (Chinese bird spider).